Here is a 92-residue protein sequence, read N- to C-terminus: C-C motif chemokine 4 (92 aa).

Positions 1–23 (MKLCVTVLSLLVLVAAFCSPALS) are cleaved as a signal peptide. 2 cysteine pairs are disulfide-bonded: cysteine 34-cysteine 58 and cysteine 35-cysteine 74.

The protein belongs to the intercrine beta (chemokine CC) family. Homodimer. Interacts with CCR5.

Its subcellular location is the secreted. Its function is as follows. Monokine with inflammatory and chemokinetic properties. The protein is C-C motif chemokine 4 (CCL4) of Canis lupus familiaris (Dog).